A 225-amino-acid chain; its full sequence is Thymidylate kinase (225 aa).

An ATP-binding site is contributed by 10–17; that stretch reads GIDGAGKS.

This sequence belongs to the thymidylate kinase family.

It catalyses the reaction dTMP + ATP = dTDP + ADP. Functionally, phosphorylation of dTMP to form dTDP in both de novo and salvage pathways of dTTP synthesis. The sequence is that of Thymidylate kinase from Polaromonas sp. (strain JS666 / ATCC BAA-500).